Here is a 142-residue protein sequence, read N- to C-terminus: Large ribosomal subunit protein uL13 (142 aa).

This sequence belongs to the universal ribosomal protein uL13 family. As to quaternary structure, part of the 50S ribosomal subunit.

Its function is as follows. This protein is one of the early assembly proteins of the 50S ribosomal subunit, although it is not seen to bind rRNA by itself. It is important during the early stages of 50S assembly. The sequence is that of Large ribosomal subunit protein uL13 from Citrobacter koseri (strain ATCC BAA-895 / CDC 4225-83 / SGSC4696).